The sequence spans 391 residues: Winged helix repair factor 1 (391 aa).

2 stretches are compositionally biased toward low complexity: residues 1 to 24 (MNIK…PSPI) and 49 to 63 (LSFN…SNIN). The interval 1–95 (MNIKRNQNNS…SITTTTATST (95 aa)) is disordered. A compositionally biased stretch (acidic residues) spans 64 to 74 (GEEDNDDDDRE). A compositionally biased stretch (low complexity) spans 82–95 (NPNPSITTTTATST).

This sequence belongs to the STK19 family.

The protein resides in the nucleus. In terms of biological role, DNA-binding protein which is required for efficient transcription-coupled nucleotide excision repair. The protein is Winged helix repair factor 1 of Dictyostelium discoideum (Social amoeba).